Here is a 457-residue protein sequence, read N- to C-terminus: Protein translocase subunit SecY (457 aa).

The next 10 membrane-spanning stretches (helical) occupy residues Ile17–Gly37, Ile75–Phe95, Leu120–Met140, Val163–Gly183, Ile195–Phe215, Ile230–Ile250, Val287–Leu307, Val326–Thr346, Leu386–Leu406, and Val412–Met432.

This sequence belongs to the SecY/SEC61-alpha family. Component of the Sec protein translocase complex. Heterotrimer consisting of SecY, SecE and SecG subunits. The heterotrimers can form oligomers, although 1 heterotrimer is thought to be able to translocate proteins. Interacts with the ribosome. Interacts with SecDF, and other proteins may be involved. Interacts with SecA.

The protein localises to the cell inner membrane. In terms of biological role, the central subunit of the protein translocation channel SecYEG. Consists of two halves formed by TMs 1-5 and 6-10. These two domains form a lateral gate at the front which open onto the bilayer between TMs 2 and 7, and are clamped together by SecE at the back. The channel is closed by both a pore ring composed of hydrophobic SecY resides and a short helix (helix 2A) on the extracellular side of the membrane which forms a plug. The plug probably moves laterally to allow the channel to open. The ring and the pore may move independently. The sequence is that of Protein translocase subunit SecY from Chlamydia muridarum (strain MoPn / Nigg).